Here is a 214-residue protein sequence, read N- to C-terminus: Osteoclast-stimulating factor 1 (214 aa).

Ser2 is modified (N-acetylserine). The SH3 domain maps to 12 to 71; it reads GQVKVFRALYTFEPRTPDELYFEEGDIIYITDMSDTNWWKGTSKGRTGLIPSNYVAEQAE. ANK repeat units follow at residues 72 to 101, 105 to 135, and 139 to 168; these read SIDN…GVNG, AGST…ELNQ, and LGDT…RTDL. Thr200 is modified (phosphothreonine). 2 positions are modified to phosphoserine: Ser202 and Ser213.

In terms of assembly, interacts with SRC and SMN1. Interacts with FASLG.

It localises to the cytoplasm. Induces bone resorption, acting probably through a signaling cascade which results in the secretion of factor(s) enhancing osteoclast formation and activity. The sequence is that of Osteoclast-stimulating factor 1 (OSTF1) from Sus scrofa (Pig).